The sequence spans 23 residues: Acidic phospholipase A2 CTs-A2 (23 aa).

Ca(2+) serves as cofactor. In terms of processing, contains 7 disulfide bonds. Expressed by the venom gland.

It is found in the secreted. The catalysed reaction is a 1,2-diacyl-sn-glycero-3-phosphocholine + H2O = a 1-acyl-sn-glycero-3-phosphocholine + a fatty acid + H(+). Its function is as follows. Snake venom phospholipase A2 (PLA2) that shows a moderate inhibition of ADP-induced human platelet aggregation when tested on platelet rich plasma. Exhibits moderate hydrolytic activities and prefers the anionic micelles (dPPC with deoxycholate) to the zwitterionic micelles (dPPC with Triton X-100). PLA2 catalyzes the calcium-dependent hydrolysis of the 2-acyl groups in 3-sn-phosphoglycerides. The polypeptide is Acidic phospholipase A2 CTs-A2 (Trimeresurus stejnegeri (Chinese green tree viper)).